Here is a 657-residue protein sequence, read N- to C-terminus: MRLKIGFILRSLLVVGSFLGLVVLWSSLSSRPDDQSPLSRMREDRDVNNPLPNRGGNGLAPGDDRFKPVVPWPHVEGVEVDLESIRRKNKAKNEQERHAGGDSQRDVMQRQYLTFKPQTFTYRDPVLRPGVLGNFEPKEPEPHGVVGGPGEKAKPLVLGPEYKQAVQASIKEFGFNMVASDMISLDRSVNDLRQEECKYWHYDENLLTSSVVIVFHNEGWSTLMRTVHSVIKRTPRKYLAEIVLIDDFSNKEHLKEKLDEYIKLWNGLVKVFRNERREGLIQARSIGAQKAKLGQVLIYLDAHCEVAVNWYAPLVAPISKDRTICTVPIIDVISGNTYEIIPQGGGDEDGYARGAWDWSMLWKRVPLTSREKRLRKTKTEPYRSPAMAGGLFAIEKDFFFELGLYDPGLQIWGGENFEISYKIWQCGGKLLFVPCSRVGHIYRLEGWQGNPPPLYVGSSPTLKNYVRVVEVWWDEYKDYFYASRPESKALPYGDISELKKFREDHNCKSFKWFMEEIAYDITAHYPLPPRNVEWGEIRGLETAYCIDSMGKTNGGFVELGPCHRMGGNQLFRINEANQLMQYDQCLTKGPDGSKVMITHCNLNEFKEWQYFKSLHRFTHITSGKCLDRSEVLHQVFISTCDSSKMTQKWEMNNIHSV.

The Cytoplasmic portion of the chain corresponds to 1–6 (MRLKIG). A helical; Signal-anchor for type II membrane protein transmembrane segment spans residues 7–29 (FILRSLLVVGSFLGLVVLWSSLS). Disordered regions lie at residues 30–66 (SRPDDQSPLSRMREDRDVNNPLPNRGGNGLAPGDDRF) and 83–105 (ESIRRKNKAKNEQERHAGGDSQR). Over 30–657 (SRPDDQSPLS…KWEMNNIHSV (628 aa)) the chain is Lumenal. 5 cysteine pairs are disulfide-bonded: C197–C435, C426–C507, C545–C562, C585–C600, and C625–C640. The interval 206-317 (LLTSSVVIVF…VNWYAPLVAP (112 aa)) is catalytic subdomain A. The substrate site is built by D247 and R277. Mn(2+) contacts are provided by D301 and H303. A catalytic subdomain B region spans residues 381–443 (PYRSPAMAGG…PCSRVGHIYR (63 aa)). Residue W412 coordinates substrate. A Mn(2+)-binding site is contributed by H440. R443 contacts substrate. The region spanning 532–652 (VEWGEIRGLE…SKMTQKWEMN (121 aa)) is the Ricin B-type lectin domain.

The protein belongs to the glycosyltransferase 2 family. GalNAc-T subfamily. Requires Mn(2+) as cofactor. In terms of tissue distribution, highly expressed in sublingual gland. Expressed at lower level in stomach, small intestiine and colon.

It localises to the golgi apparatus membrane. The catalysed reaction is L-seryl-[protein] + UDP-N-acetyl-alpha-D-galactosamine = a 3-O-[N-acetyl-alpha-D-galactosaminyl]-L-seryl-[protein] + UDP + H(+). The enzyme catalyses L-threonyl-[protein] + UDP-N-acetyl-alpha-D-galactosamine = a 3-O-[N-acetyl-alpha-D-galactosaminyl]-L-threonyl-[protein] + UDP + H(+). The protein operates within protein modification; protein glycosylation. In terms of biological role, glycopeptide transferase involved in O-linked oligosaccharide biosynthesis, which catalyzes the transfer of an N-acetyl-D-galactosamine residue to an already glycosylated peptide. In contrast to other proteins of the family, it does not act as a peptide transferase that transfers GalNAc onto serine or threonine residue on the protein receptor, but instead requires the prior addition of a GalNAc on a peptide before adding additional GalNAc moieties. Some peptide transferase activity is however not excluded, considering that its appropriate peptide substrate may remain unidentified. This Mus musculus (Mouse) protein is N-acetylgalactosaminyltransferase 7 (Galnt7).